Here is a 102-residue protein sequence, read N- to C-terminus: Small ribosomal subunit protein uS10 (102 aa).

It belongs to the universal ribosomal protein uS10 family. Part of the 30S ribosomal subunit.

Its function is as follows. Involved in the binding of tRNA to the ribosomes. The chain is Small ribosomal subunit protein uS10 from Thermoanaerobacter pseudethanolicus (strain ATCC 33223 / 39E) (Clostridium thermohydrosulfuricum).